The following is a 461-amino-acid chain: tRNA-2-methylthio-N(6)-dimethylallyladenosine synthase (461 aa).

Residues 18-134 (KHIYIQTLGC…LPDFISRIEK (117 aa)) enclose the MTTase N-terminal domain. Positions 27, 63, 97, 172, 176, and 179 each coordinate [4Fe-4S] cluster. Positions 158–388 (CNGQVSSFVT…QALQEQHTLE (231 aa)) constitute a Radical SAM core domain. The TRAM domain maps to 391–454 (KAMEGKQEDV…LHSLRGEMLC (64 aa)).

Belongs to the methylthiotransferase family. MiaB subfamily. Monomer. [4Fe-4S] cluster is required as a cofactor.

It is found in the cytoplasm. It carries out the reaction N(6)-dimethylallyladenosine(37) in tRNA + (sulfur carrier)-SH + AH2 + 2 S-adenosyl-L-methionine = 2-methylsulfanyl-N(6)-dimethylallyladenosine(37) in tRNA + (sulfur carrier)-H + 5'-deoxyadenosine + L-methionine + A + S-adenosyl-L-homocysteine + 2 H(+). Catalyzes the methylthiolation of N6-(dimethylallyl)adenosine (i(6)A), leading to the formation of 2-methylthio-N6-(dimethylallyl)adenosine (ms(2)i(6)A) at position 37 in tRNAs that read codons beginning with uridine. The polypeptide is tRNA-2-methylthio-N(6)-dimethylallyladenosine synthase (Syntrophus aciditrophicus (strain SB)).